Here is a 665-residue protein sequence, read N- to C-terminus: FAD-dependent oxidoreductase domain-containing protein 2 (665 aa).

Positions 1 to 17 are cleaved as a signal peptide; sequence MGPSGLLVALALHLAVC. Asn136 is a glycosylation site (N-linked (GlcNAc...) asparagine). A disordered region spans residues 642–665; that stretch reads RWLGDHSTAPEPLTQSLDSNKEEL. Residues 662-665 carry the Prevents secretion from ER motif; it reads KEEL.

The protein belongs to the FOXRED2 family. As to quaternary structure, interacts with SEL1L. May interact with OS9 and DNAJC10. Interacts with TXNDC16. FAD is required as a cofactor. In terms of processing, N-glycosylated.

Its subcellular location is the endoplasmic reticulum lumen. Probable flavoprotein which may function in endoplasmic reticulum associated degradation (ERAD). May bind non-native proteins in the endoplasmic reticulum and target them to the ubiquitination machinery for subsequent degradation. This is FAD-dependent oxidoreductase domain-containing protein 2 from Mus musculus (Mouse).